Reading from the N-terminus, the 387-residue chain is Sorting nexin-7 (387 aa).

Residues 30–151 (KDLFITVDEP…IFLTAQAWEL (122 aa)) enclose the PX domain. A 1,2-diacyl-sn-glycero-3-phospho-(1D-myo-inositol-3-phosphate) is bound by residues arginine 73, glutamine 75, lysine 103, and arginine 117. Positions 178-387 (GVKNRPEEFM…HLEETSEDKP (210 aa)) constitute a BAR domain.

Belongs to the sorting nexin family. Heterodimer; heterodimerizes with SNX4.

Its subcellular location is the early endosome membrane. Its function is as follows. Involved in the regulation of endocytosis and in several stages of intracellular trafficking. Together with SNX4, involved in autophagosome assembly by regulating trafficking and recycling of phospholipid scramblase ATG9A. In Macaca fascicularis (Crab-eating macaque), this protein is Sorting nexin-7 (SNX7).